The following is a 259-amino-acid chain: Global transcriptional regulator CodY (259 aa).

The segment at 1 to 155 is GAF domain; it reads MALLQKTRII…GATVVGMEIL (155 aa). A DNA-binding region (H-T-H motif) is located at residues 203–222; sequence ASKIADRVGITRSVIVNALR. A Phosphoserine modification is found at Ser215.

This sequence belongs to the CodY family.

Its subcellular location is the cytoplasm. Its function is as follows. DNA-binding global transcriptional regulator which is involved in the adaptive response to starvation and acts by directly or indirectly controlling the expression of numerous genes in response to nutrient availability. During rapid exponential growth, CodY is highly active and represses genes whose products allow adaptation to nutrient depletion. In Bacillus velezensis (strain DSM 23117 / BGSC 10A6 / LMG 26770 / FZB42) (Bacillus amyloliquefaciens subsp. plantarum), this protein is Global transcriptional regulator CodY.